The following is a 149-amino-acid chain: 1,4-dihydroxy-2-naphthoyl-CoA hydrolase (149 aa).

Asp19 is an active-site residue.

Belongs to the 4-hydroxybenzoyl-CoA thioesterase family. DHNA-CoA hydrolase subfamily.

It catalyses the reaction 1,4-dihydroxy-2-naphthoyl-CoA + H2O = 1,4-dihydroxy-2-naphthoate + CoA + H(+). Its pathway is cofactor biosynthesis; phylloquinone biosynthesis. It participates in quinol/quinone metabolism; 1,4-dihydroxy-2-naphthoate biosynthesis; 1,4-dihydroxy-2-naphthoate from chorismate: step 7/7. Functionally, catalyzes the hydrolysis of 1,4-dihydroxy-2-naphthoyl-CoA (DHNA-CoA) to 1,4-dihydroxy-2-naphthoate (DHNA), a reaction involved in phylloquinone (vitamin K1) biosynthesis. The sequence is that of 1,4-dihydroxy-2-naphthoyl-CoA hydrolase from Synechococcus sp. (strain CC9605).